A 374-amino-acid chain; its full sequence is Dihydroorotate dehydrogenase (quinone) (374 aa).

FMN contacts are provided by residues Ala78 to Lys82 and Thr102. Lys82 is a substrate binding site. Asn127–Phe131 contacts substrate. Residues Asn159 and Asn192 each coordinate FMN. Asn192 serves as a coordination point for substrate. The Nucleophile role is filled by Ser195. Asn197 is a binding site for substrate. FMN is bound by residues Lys230 and Thr258. Residue Asn259–Thr260 coordinates substrate. Residues Gly287, Gly316, and Tyr337–Thr338 contribute to the FMN site.

This sequence belongs to the dihydroorotate dehydrogenase family. Type 2 subfamily. Monomer. Requires FMN as cofactor.

The protein resides in the cell membrane. It catalyses the reaction (S)-dihydroorotate + a quinone = orotate + a quinol. The protein operates within pyrimidine metabolism; UMP biosynthesis via de novo pathway; orotate from (S)-dihydroorotate (quinone route): step 1/1. Functionally, catalyzes the conversion of dihydroorotate to orotate with quinone as electron acceptor. The sequence is that of Dihydroorotate dehydrogenase (quinone) from Acaryochloris marina (strain MBIC 11017).